We begin with the raw amino-acid sequence, 1393 residues long: Rab3 GTPase-activating protein non-catalytic subunit (1393 aa).

The disordered stretch occupies residues 36 to 67 (RDPSKSTDWEDDGWGAWEENEPQEPEEEGNTC). Serine 39 bears the Phosphoserine mark. Over residues 44–64 (WEDDGWGAWEENEPQEPEEEG) the composition is skewed to acidic residues. A Phosphoserine modification is found at serine 450. Threonine 901 carries the phosphothreonine modification. 2 positions are modified to phosphoserine: serine 916 and serine 978.

Belongs to the Rab3-GAP regulatory subunit family. As to quaternary structure, the Rab3 GTPase-activating complex is a heterodimer composed of RAB3GAP1 and RAB3GAP2. The Rab3 GTPase-activating complex interacts with DMXL2. Interacts with LMAN1. In terms of tissue distribution, ubiquitous.

The protein resides in the cytoplasm. The protein localises to the endoplasmic reticulum. Regulatory subunit of the Rab3 GTPase-activating (Rab3GAP) complex composed of RAB3GAP1 and RAB3GAP2, which has GTPase-activating protein (GAP) activity towards various Rab3 subfamily members (RAB3A, RAB3B, RAB3C and RAB3D), RAB5A and RAB43, and guanine nucleotide exchange factor (GEF) activity towards RAB18. As part of the Rab3GAP complex, acts as a GAP for Rab3 proteins by converting active RAB3-GTP to the inactive form RAB3-GDP. Rab3 proteins are involved in regulated exocytosis of neurotransmitters and hormones. The Rab3GAP complex acts as a GEF for RAB18 by promoting the conversion of inactive RAB18-GDP to the active form RAB18-GTP. Recruits and stabilizes RAB18 at the cis-Golgi membrane in human fibroblasts where RAB18 is most likely activated. Also involved in RAB18 recruitment at the endoplasmic reticulum (ER) membrane where it maintains proper ER structure. Required for normal eye and brain development. May participate in neurodevelopmental processes such as proliferation, migration and differentiation before synapse formation, and non-synaptic vesicular release of neurotransmitters. This Homo sapiens (Human) protein is Rab3 GTPase-activating protein non-catalytic subunit.